The sequence spans 92 residues: UPF0223 protein SP_1404 (92 aa).

Belongs to the UPF0223 family.

The protein is UPF0223 protein SP_1404 of Streptococcus pneumoniae serotype 4 (strain ATCC BAA-334 / TIGR4).